Reading from the N-terminus, the 133-residue chain is Ribonuclease P protein component (133 aa).

The tract at residues 114–133 is disordered; that stretch reads RSRPTPEEKSEPAGVDSTDA.

Belongs to the RnpA family. In terms of assembly, consists of a catalytic RNA component (M1 or rnpB) and a protein subunit.

The enzyme catalyses Endonucleolytic cleavage of RNA, removing 5'-extranucleotides from tRNA precursor.. In terms of biological role, RNaseP catalyzes the removal of the 5'-leader sequence from pre-tRNA to produce the mature 5'-terminus. It can also cleave other RNA substrates such as 4.5S RNA. The protein component plays an auxiliary but essential role in vivo by binding to the 5'-leader sequence and broadening the substrate specificity of the ribozyme. In Pseudomonas syringae pv. tomato (strain ATCC BAA-871 / DC3000), this protein is Ribonuclease P protein component.